We begin with the raw amino-acid sequence, 175 residues long: Albumin-1 (175 aa).

Residues C135 and C141 are joined by a disulfide bond.

It belongs to the protease inhibitor I3 (leguminous Kunitz-type inhibitor) family.

Its function is as follows. 2S seed storage protein. The protein is Albumin-1 of Psophocarpus tetragonolobus (Winged bean).